A 232-amino-acid chain; its full sequence is MESTLFLSKPLPTTIKTTTHSLSSVYPNPFKPNNLTFPRTTHKHPTTTTITAAISRTKKEETVETVQKHLENCYLLAAINYKGFTVKQFQDLRKALPENTTLIVAKNTLVEKAVQDTQWAAIKPCMKGMNAWLFVHSEEIPIAIKPYRTFQKERKLEDNDFTGACFEGKFYGPGEVKRLETMPSKAEIFAKLLGSLKSPGSALVGTLQAPARDLVFLLKAYIKKLEDEQQQG.

A chloroplast-targeting transit peptide spans 1–52 (MESTLFLSKPLPTTIKTTTHSLSSVYPNPFKPNNLTFPRTTHKHPTTTTITA).

It belongs to the universal ribosomal protein uL10 family. Component of the chloroplast large ribosomal subunit (LSU). Mature 70S chloroplast ribosomes of higher plants consist of a small (30S) and a large (50S) subunit. The 30S small subunit contains 1 molecule of ribosomal RNA (16S rRNA) and 24 different proteins. The 50S large subunit contains 3 rRNA molecules (23S, 5S and 4.5S rRNA) and 33 different proteins.

The protein localises to the plastid. It localises to the chloroplast. In terms of biological role, component of the chloroplast ribosome (chloro-ribosome), a dedicated translation machinery responsible for the synthesis of chloroplast genome-encoded proteins, including proteins of the transcription and translation machinery and components of the photosynthetic apparatus. This chain is Large ribosomal subunit protein uL10c (RPL10), found in Spinacia oleracea (Spinach).